Reading from the N-terminus, the 338-residue chain is Ketol-acid reductoisomerase (NADP(+)) (338 aa).

A KARI N-terminal Rossmann domain is found at 1 to 181 (MKIYYDKDCN…GGGRAGIIET (181 aa)). NADP(+) contacts are provided by residues 24 to 27 (YGSQ), arginine 47, serine 50, serine 52, and 82 to 85 (DETQ). Residue histidine 107 is part of the active site. Position 133 (glycine 133) interacts with NADP(+). The region spanning 182–327 (SFKEETETDL…ARLRSMMSWI (146 aa)) is the KARI C-terminal knotted domain. Positions 190, 194, 226, and 230 each coordinate Mg(2+). Serine 251 contributes to the substrate binding site.

Belongs to the ketol-acid reductoisomerase family. Mg(2+) is required as a cofactor.

The enzyme catalyses (2R)-2,3-dihydroxy-3-methylbutanoate + NADP(+) = (2S)-2-acetolactate + NADPH + H(+). It carries out the reaction (2R,3R)-2,3-dihydroxy-3-methylpentanoate + NADP(+) = (S)-2-ethyl-2-hydroxy-3-oxobutanoate + NADPH + H(+). Its pathway is amino-acid biosynthesis; L-isoleucine biosynthesis; L-isoleucine from 2-oxobutanoate: step 2/4. It functions in the pathway amino-acid biosynthesis; L-valine biosynthesis; L-valine from pyruvate: step 2/4. Involved in the biosynthesis of branched-chain amino acids (BCAA). Catalyzes an alkyl-migration followed by a ketol-acid reduction of (S)-2-acetolactate (S2AL) to yield (R)-2,3-dihydroxy-isovalerate. In the isomerase reaction, S2AL is rearranged via a Mg-dependent methyl migration to produce 3-hydroxy-3-methyl-2-ketobutyrate (HMKB). In the reductase reaction, this 2-ketoacid undergoes a metal-dependent reduction by NADPH to yield (R)-2,3-dihydroxy-isovalerate. The polypeptide is Ketol-acid reductoisomerase (NADP(+)) (Geobacter metallireducens (strain ATCC 53774 / DSM 7210 / GS-15)).